The primary structure comprises 206 residues: Large ribosomal subunit protein uL4 (206 aa).

The disordered stretch occupies residues 44–87 (KRQGTHATKTRGMKRGGGAKPWRQKGTGRARAGSTRSPLWRGGG).

Belongs to the universal ribosomal protein uL4 family. Part of the 50S ribosomal subunit.

Functionally, one of the primary rRNA binding proteins, this protein initially binds near the 5'-end of the 23S rRNA. It is important during the early stages of 50S assembly. It makes multiple contacts with different domains of the 23S rRNA in the assembled 50S subunit and ribosome. Its function is as follows. Forms part of the polypeptide exit tunnel. The polypeptide is Large ribosomal subunit protein uL4 (Maridesulfovibrio salexigens (strain ATCC 14822 / DSM 2638 / NCIMB 8403 / VKM B-1763) (Desulfovibrio salexigens)).